Reading from the N-terminus, the 209-residue chain is Uracil phosphoribosyltransferase (209 aa).

5-phospho-alpha-D-ribose 1-diphosphate is bound by residues Arg-79, Arg-104, and 131–139 (DPMLATGNS). Uracil-binding positions include Ile-194 and 199 to 201 (GDA). Asp-200 contacts 5-phospho-alpha-D-ribose 1-diphosphate.

The protein belongs to the UPRTase family. Mg(2+) is required as a cofactor.

It catalyses the reaction UMP + diphosphate = 5-phospho-alpha-D-ribose 1-diphosphate + uracil. Its pathway is pyrimidine metabolism; UMP biosynthesis via salvage pathway; UMP from uracil: step 1/1. Its activity is regulated as follows. Allosterically activated by GTP. Functionally, catalyzes the conversion of uracil and 5-phospho-alpha-D-ribose 1-diphosphate (PRPP) to UMP and diphosphate. The chain is Uracil phosphoribosyltransferase from Rhizobium rhizogenes (strain K84 / ATCC BAA-868) (Agrobacterium radiobacter).